The primary structure comprises 407 residues: Peptidase T (407 aa).

Histidine 78 is a binding site for Zn(2+). Aspartate 80 is an active-site residue. Aspartate 141 contacts Zn(2+). The active-site Proton acceptor is glutamate 175. 3 residues coordinate Zn(2+): glutamate 176, aspartate 198, and histidine 380.

It belongs to the peptidase M20B family. Zn(2+) is required as a cofactor.

Its subcellular location is the cytoplasm. The catalysed reaction is Release of the N-terminal residue from a tripeptide.. Its function is as follows. Cleaves the N-terminal amino acid of tripeptides. The chain is Peptidase T from Clostridium novyi (strain NT).